The following is a 416-amino-acid chain: Tiggy-winkle hedgehog protein (416 aa).

The signal sequence occupies residues 1–26; that stretch reads MDVRLHLKQFALLCFISLLLTPCGLA. Cysteine 27 is lipidated: N-palmitoyl cysteine. Ca(2+) contacts are provided by glutamate 92, glutamate 93, aspartate 98, threonine 128, glutamate 129, aspartate 132, and aspartate 134. 3 residues coordinate Zn(2+): histidine 143, aspartate 150, and histidine 185. Glycine 200 carries the Cholesterol glycine ester lipid modification.

This sequence belongs to the hedgehog family. As to quaternary structure, multimer. In terms of assembly, interacts with HHATL/GUP1 which negatively regulates HHAT-mediated palmitoylation of the TWHH N-terminus. Interacts with BOC and CDON. Interacts with HHIP. Interacts with DISP1 via its cholesterol anchor. Interacts with SCUBE2. In terms of processing, the C-terminal domain displays an autoproteolysis activity and a cholesterol transferase activity. Both activities result in the cleavage of the full-length protein into two parts (N-product and C-product) followed by the covalent attachment of a cholesterol moiety to the C-terminal of the newly generated N-product. Cholesterylation is required for the tiggy-winkle hedgehog protein N-product targeting to lipid rafts and multimerization. N-product is the active species in both local and long-range signaling, whereas the C-product is degraded in the endoplasmic reticulum. Post-translationally, N-palmitoylation by HHAT of N-product is required for tiggy-winkle hedgehog protein N-product multimerization and full activity. It is a prerequisite for the membrane-proximal positioning and the subsequent shedding of this N-terminal peptide. The lipidated N- and C-terminal peptides of N-product can be cleaved (shedding). The N-terminal palmitoylated peptide is cleaved at the Cardin-Weintraub (CW) motif site. The cleavage reduced the interactions with heparan sulfate. The cleavage is enhanced by SCUBE2. As to expression, expressed in the ventral midline of the neural tube and brain. In the developing brain, expression occurs in domains that include a discrete region in the floor of the diencephalon. Not detected in the notochord or developing fin bud.

The protein resides in the cell membrane. Its subcellular location is the endoplasmic reticulum membrane. It localises to the golgi apparatus membrane. Its function is as follows. The C-terminal part of the tiggy-winkle hedgehog protein precursor displays an autoproteolysis and a cholesterol transferase activity. Both activities result in the cleavage of the full-length protein into two parts (N-product and C-product) followed by the covalent attachment of a cholesterol moiety to the C-terminal of the newly generated N-product. Both activities occur in the endoplasmic reticulum. Once cleaved, the C-product is degraded in the endoplasmic reticulum. The dually lipidated tiggy-winkle hedgehog protein N-product is a morphogen which is essential for a variety of patterning events during development. Involved in dorso-ventral patterning of the brain and in early patterning of the developing eyes. Binds to the patched (PTCH1) receptor, which functions in association with smoothened (SMO), to activate the transcription of target genes. The chain is Tiggy-winkle hedgehog protein (shhb) from Danio rerio (Zebrafish).